We begin with the raw amino-acid sequence, 312 residues long: D-alanine--D-alanine ligase (312 aa).

One can recognise an ATP-grasp domain in the interval Lys103–Asp303. Met130–Thr186 contributes to the ATP binding site. Mg(2+) contacts are provided by Asp254, Glu270, and Asn272.

It belongs to the D-alanine--D-alanine ligase family. Requires Mg(2+) as cofactor. The cofactor is Mn(2+).

The protein localises to the cytoplasm. The enzyme catalyses 2 D-alanine + ATP = D-alanyl-D-alanine + ADP + phosphate + H(+). Its pathway is cell wall biogenesis; peptidoglycan biosynthesis. Cell wall formation. This is D-alanine--D-alanine ligase from Rhizorhabdus wittichii (strain DSM 6014 / CCUG 31198 / JCM 15750 / NBRC 105917 / EY 4224 / RW1) (Sphingomonas wittichii).